The chain runs to 858 residues: Bifunctional uridylyltransferase/uridylyl-removing enzyme (858 aa).

The interval 1–324 (MSASVAEPPP…PATSGVTRVL (324 aa)) is uridylyltransferase. Residues 325–681 (SPGRFVEKQG…ARPSPVGDAL (357 aa)) form a uridylyl-removing region. Residues 443–565 (VDQHILMVLR…VGSERRLTAL (123 aa)) form the HD domain. ACT domains follow at residues 682 to 761 (QVLV…PEPS) and 790 to 858 (ILSV…AIAV).

The protein belongs to the GlnD family. Requires Mg(2+) as cofactor.

The catalysed reaction is [protein-PII]-L-tyrosine + UTP = [protein-PII]-uridylyl-L-tyrosine + diphosphate. The enzyme catalyses [protein-PII]-uridylyl-L-tyrosine + H2O = [protein-PII]-L-tyrosine + UMP + H(+). With respect to regulation, uridylyltransferase (UTase) activity is inhibited by glutamine, while glutamine activates uridylyl-removing (UR) activity. Its function is as follows. Modifies, by uridylylation and deuridylylation, the PII regulatory proteins (GlnB and homologs), in response to the nitrogen status of the cell that GlnD senses through the glutamine level. Under low glutamine levels, catalyzes the conversion of the PII proteins and UTP to PII-UMP and PPi, while under higher glutamine levels, GlnD hydrolyzes PII-UMP to PII and UMP (deuridylylation). Thus, controls uridylylation state and activity of the PII proteins, and plays an important role in the regulation of nitrogen assimilation and metabolism. The sequence is that of Bifunctional uridylyltransferase/uridylyl-removing enzyme from Burkholderia pseudomallei (strain K96243).